The chain runs to 84 residues: Large ribosomal subunit protein bL27 (84 aa).

Positions 1 to 21 (MATKKAGGSSRNGRDSAGRRL) are disordered.

It belongs to the bacterial ribosomal protein bL27 family.

The sequence is that of Large ribosomal subunit protein bL27 from Pelagibacter ubique (strain HTCC1062).